The sequence spans 289 residues: Glucosamine-6-phosphate deaminase 1 (289 aa).

N6-acetyllysine is present on K64. D72 functions as the Proton acceptor; for enolization step in the catalytic mechanism. D141 serves as the catalytic For ring-opening step. The active-site Proton acceptor; for ring-opening step is the H143. Residue E148 is the For ring-opening step of the active site. At T161 the chain carries Phosphothreonine.

Belongs to the glucosamine/galactosamine-6-phosphate isomerase family. Homohexamer. At the equatorial segment of the sperm head.

It is found in the cytoplasm. It carries out the reaction alpha-D-glucosamine 6-phosphate + H2O = beta-D-fructose 6-phosphate + NH4(+). Its pathway is nucleotide-sugar biosynthesis; UDP-N-acetyl-alpha-D-glucosamine biosynthesis; alpha-D-glucosamine 6-phosphate from D-fructose 6-phosphate: step 1/1. Allosterically activated by N-acetylglucosamine-6-phosphate (GlcNAc6P). Functionally, catalyzes the reversible conversion of alpha-D-glucosamine 6-phosphate (GlcN-6P) into beta-D-fructose 6-phosphate (Fru-6P) and ammonium ion, a regulatory reaction step in de novo uridine diphosphate-N-acetyl-alpha-D-glucosamine (UDP-GlcNAc) biosynthesis via hexosamine pathway. Deamination is coupled to aldo-keto isomerization mediating the metabolic flux from UDP-GlcNAc toward Fru-6P. At high ammonium level can drive amination and isomerization of Fru-6P toward hexosamines and UDP-GlcNAc synthesis. Has a role in fine tuning the metabolic fluctuations of cytosolic UDP-GlcNAc and their effects on hyaluronan synthesis that occur during tissue remodeling. Seems to trigger calcium oscillations in mammalian eggs. These oscillations serve as the essential trigger for egg activation and early development of the embryo. This chain is Glucosamine-6-phosphate deaminase 1, found in Mesocricetus auratus (Golden hamster).